A 481-amino-acid polypeptide reads, in one-letter code: MESVPESVPSPNSNTPSIPPPVNSVPPFLSKTYDMVDDPLTNEVVSWSSGNNSFVVWSAPEFSKVLLPKYFKHNNFSSFVRQLNTYGFRKVDPDRWEFANEGFLRGRKQLLKSIVRRKPSHVQQNQQQTQVQSSSVGACVEVGKFGIEEEVERLKRDKNVLMQELVRLRQQQQATENQLQNVGQKVQVMEQRQQQMMSFLAKAVQSPGFLNQLVQQNNNDGNRQIPGSNKKRRLPVDEQENRGDNVANGLNRQIVRYQPSINEAAQNMLRQFLNTSTSPRYESVSNNPDSFLLGDVPSSTSVDNGNPSSRVSGVTLAEFSPNTVQSATNQVPEASLAHHPQAGLVQPNIGQSPAQGAAPADSWSPEFDLVGCETDSGECFDPIMAVLDESEGDAISPEGEGKMNELLEGVPKLPGIQDPFWEQFFSVELPAIADTDDILSGSVENNDLVLEQEPNEWTRNEQQMKYLTEQMGLLSSEAQRK.

Over residues 1-16 the composition is skewed to low complexity; the sequence is MESVPESVPSPNSNTP. The segment at 1–23 is disordered; sequence MESVPESVPSPNSNTPSIPPPVN. Residues 25–119 mediate DNA binding; it reads VPPFLSKTYD…LLKSIVRRKP (95 aa). The tract at residues 138–204 is hydrophobic repeat HR-A/B; the sequence is ACVEVGKFGI…QMMSFLAKAV (67 aa). The segment covering 213-227 has biased composition (polar residues); it reads LVQQNNNDGNRQIPG. The tract at residues 213–244 is disordered; that stretch reads LVQQNNNDGNRQIPGSNKKRRLPVDEQENRGD. Residues 229-233 carry the Nuclear localization signal motif; that stretch reads NKKRR. Positions 234–243 are enriched in basic and acidic residues; it reads LPVDEQENRG. The AHA motif lies at 418–427; it reads DPFWEQFFSV. Residues 467–474 carry the Nuclear export signal motif; it reads LTEQMGLL.

It belongs to the HSF family. Class A subfamily. In terms of assembly, homotrimer. Binds to HSBP. In terms of processing, exhibits temperature-dependent phosphorylation.

The protein resides in the cytoplasm. Its subcellular location is the nucleus. In terms of biological role, transcriptional activator that specifically binds DNA sequence 5'-AGAAnnTTCT-3' known as heat shock promoter elements (HSE). The polypeptide is Heat stress transcription factor A-1b (HSFA1B) (Arabidopsis thaliana (Mouse-ear cress)).